The sequence spans 515 residues: DNA-directed RNA polymerase subunit Rpo2N (515 aa).

Belongs to the RNA polymerase beta chain family. In terms of assembly, part of the RNA polymerase complex.

The protein resides in the cytoplasm. The enzyme catalyses RNA(n) + a ribonucleoside 5'-triphosphate = RNA(n+1) + diphosphate. Its function is as follows. DNA-dependent RNA polymerase (RNAP) catalyzes the transcription of DNA into RNA using the four ribonucleoside triphosphates as substrates. The Rpo2 subunit (Rpo2N and Rpo2C in this organism) is implicated in DNA promoter recognition and in nucleotide binding. The polypeptide is DNA-directed RNA polymerase subunit Rpo2N (Methanothermobacter thermautotrophicus (strain Winter) (Methanobacterium thermoautotrophicum)).